The primary structure comprises 272 residues: Indole-3-glycerol phosphate synthase (272 aa).

It belongs to the TrpC family.

The enzyme catalyses 1-(2-carboxyphenylamino)-1-deoxy-D-ribulose 5-phosphate + H(+) = (1S,2R)-1-C-(indol-3-yl)glycerol 3-phosphate + CO2 + H2O. The protein operates within amino-acid biosynthesis; L-tryptophan biosynthesis; L-tryptophan from chorismate: step 4/5. This is Indole-3-glycerol phosphate synthase from Mycolicibacterium paratuberculosis (strain ATCC BAA-968 / K-10) (Mycobacterium paratuberculosis).